A 462-amino-acid polypeptide reads, in one-letter code: Asparagine--tRNA ligase (462 aa).

The protein belongs to the class-II aminoacyl-tRNA synthetase family. As to quaternary structure, homodimer.

It localises to the cytoplasm. The enzyme catalyses tRNA(Asn) + L-asparagine + ATP = L-asparaginyl-tRNA(Asn) + AMP + diphosphate + H(+). The polypeptide is Asparagine--tRNA ligase (Thermosynechococcus vestitus (strain NIES-2133 / IAM M-273 / BP-1)).